Reading from the N-terminus, the 611-residue chain is Leucine aminopeptidase 2 (611 aa).

A peptide contacts are provided by residues 135 to 137 (QCQ) and 265 to 270 (PYGGME). A Zn(2+)-binding site is contributed by H294. E295 (proton acceptor) is an active-site residue. Zn(2+) is bound by residues H298 and E317. Catalysis depends on Y383, which acts as the Proton donor.

This sequence belongs to the peptidase M1 family. Zn(2+) is required as a cofactor.

It localises to the cytoplasm. It is found in the nucleus. It catalyses the reaction an epoxide + H2O = an ethanediol. In terms of biological role, aminopeptidase that preferentially cleaves di- and tripeptides. Also has low epoxide hydrolase activity (in vitro). Can hydrolyze the epoxide leukotriene LTA(4) but it forms preferentially 5,6-dihydroxy-7,9,11,14-eicosatetraenoic acid rather than the cytokine leukotriene B(4) as the product compared to the homologous mammalian enzyme (in vitro). This chain is Leucine aminopeptidase 2, found in Chaetomium globosum (strain ATCC 6205 / CBS 148.51 / DSM 1962 / NBRC 6347 / NRRL 1970) (Soil fungus).